A 283-amino-acid polypeptide reads, in one-letter code: Pantothenate synthetase (283 aa).

26 to 33 (MGNLHEGH) provides a ligand contact to ATP. Histidine 33 functions as the Proton donor in the catalytic mechanism. (R)-pantoate is bound at residue glutamine 57. Position 57 (glutamine 57) interacts with beta-alanine. Position 144–147 (144–147 (GKKD)) interacts with ATP. Glutamine 150 is a binding site for (R)-pantoate. ATP-binding positions include valine 173 and 181–184 (LSSR).

It belongs to the pantothenate synthetase family. In terms of assembly, homodimer.

The protein resides in the cytoplasm. It catalyses the reaction (R)-pantoate + beta-alanine + ATP = (R)-pantothenate + AMP + diphosphate + H(+). It participates in cofactor biosynthesis; (R)-pantothenate biosynthesis; (R)-pantothenate from (R)-pantoate and beta-alanine: step 1/1. Catalyzes the condensation of pantoate with beta-alanine in an ATP-dependent reaction via a pantoyl-adenylate intermediate. The chain is Pantothenate synthetase from Ralstonia pickettii (strain 12J).